A 343-amino-acid polypeptide reads, in one-letter code: Aspartate carbamoyltransferase catalytic subunit (343 aa).

The carbamoyl phosphate site is built by R91 and T92. An L-aspartate-binding site is contributed by K119. Residues R141, H171, and Q174 each coordinate carbamoyl phosphate. L-aspartate is bound by residues R204 and R259. Carbamoyl phosphate is bound by residues G300 and P301.

It belongs to the aspartate/ornithine carbamoyltransferase superfamily. ATCase family. In terms of assembly, heterododecamer (2C3:3R2) of six catalytic PyrB chains organized as two trimers (C3), and six regulatory PyrI chains organized as three dimers (R2).

It catalyses the reaction carbamoyl phosphate + L-aspartate = N-carbamoyl-L-aspartate + phosphate + H(+). It functions in the pathway pyrimidine metabolism; UMP biosynthesis via de novo pathway; (S)-dihydroorotate from bicarbonate: step 2/3. In terms of biological role, catalyzes the condensation of carbamoyl phosphate and aspartate to form carbamoyl aspartate and inorganic phosphate, the committed step in the de novo pyrimidine nucleotide biosynthesis pathway. The sequence is that of Aspartate carbamoyltransferase catalytic subunit from Burkholderia cenocepacia (strain HI2424).